The chain runs to 94 residues: Aspartyl/glutamyl-tRNA(Asn/Gln) amidotransferase subunit C (94 aa).

The protein belongs to the GatC family. As to quaternary structure, heterotrimer of A, B and C subunits.

It catalyses the reaction L-glutamyl-tRNA(Gln) + L-glutamine + ATP + H2O = L-glutaminyl-tRNA(Gln) + L-glutamate + ADP + phosphate + H(+). The enzyme catalyses L-aspartyl-tRNA(Asn) + L-glutamine + ATP + H2O = L-asparaginyl-tRNA(Asn) + L-glutamate + ADP + phosphate + 2 H(+). Functionally, allows the formation of correctly charged Asn-tRNA(Asn) or Gln-tRNA(Gln) through the transamidation of misacylated Asp-tRNA(Asn) or Glu-tRNA(Gln) in organisms which lack either or both of asparaginyl-tRNA or glutaminyl-tRNA synthetases. The reaction takes place in the presence of glutamine and ATP through an activated phospho-Asp-tRNA(Asn) or phospho-Glu-tRNA(Gln). The protein is Aspartyl/glutamyl-tRNA(Asn/Gln) amidotransferase subunit C of Desulfatibacillum aliphaticivorans.